Consider the following 361-residue polypeptide: Cytosolic Fe-S cluster assembly factor CFD1 (361 aa).

Residue 37-44 (GKGGVGKS) coordinates ATP. Residues Cys218 and Cys221 each contribute to the [4Fe-4S] cluster site. The interval 293 to 314 (HSQSAAAQLPNSGDTESLTPAG) is disordered.

Belongs to the Mrp/NBP35 ATP-binding proteins family. NUBP2/CFD1 subfamily. Heterotetramer of 2 NBP35 and 2 CFD1 chains. [4Fe-4S] cluster serves as cofactor.

The protein resides in the cytoplasm. Its function is as follows. Component of the cytosolic iron-sulfur (Fe/S) protein assembly (CIA) machinery. Required for maturation of extramitochondrial Fe-S proteins. The NBP35-CFD1 heterotetramer forms a Fe-S scaffold complex, mediating the de novo assembly of an Fe-S cluster and its transfer to target apoproteins. The sequence is that of Cytosolic Fe-S cluster assembly factor CFD1 from Mycosarcoma maydis (Corn smut fungus).